We begin with the raw amino-acid sequence, 235 residues long: Alpha-S2-casein (235 aa).

The signal sequence occupies residues 1–15 (MKFFIFTCLLAVAFA). Phosphoserine occurs at positions 23, 24, 25, 28, 47, 72, 73, 74, 77, 147, 149, and 168. Positions 144 to 158 (EELSTSEEPVSSSQE) are enriched in polar residues. The interval 144-163 (EELSTSEEPVSSSQEENTKT) is disordered.

Belongs to the alpha-casein family. As to expression, mammary gland specific. Secreted in milk.

It is found in the secreted. In terms of biological role, important role in the capacity of milk to transport calcium phosphate. This Sus scrofa (Pig) protein is Alpha-S2-casein (CSN1S2).